The chain runs to 359 residues: 3-dehydroquinate synthase (359 aa).

NAD(+) is bound by residues 71 to 76 (DGEAYK), 105 to 109 (GVVGD), 129 to 130 (TT), lysine 142, and lysine 151. Glutamate 184, histidine 247, and histidine 264 together coordinate Zn(2+).

Belongs to the sugar phosphate cyclases superfamily. Dehydroquinate synthase family. Requires Co(2+) as cofactor. Zn(2+) is required as a cofactor. NAD(+) serves as cofactor.

Its subcellular location is the cytoplasm. It catalyses the reaction 7-phospho-2-dehydro-3-deoxy-D-arabino-heptonate = 3-dehydroquinate + phosphate. It functions in the pathway metabolic intermediate biosynthesis; chorismate biosynthesis; chorismate from D-erythrose 4-phosphate and phosphoenolpyruvate: step 2/7. In terms of biological role, catalyzes the conversion of 3-deoxy-D-arabino-heptulosonate 7-phosphate (DAHP) to dehydroquinate (DHQ). This chain is 3-dehydroquinate synthase, found in Burkholderia cenocepacia (strain ATCC BAA-245 / DSM 16553 / LMG 16656 / NCTC 13227 / J2315 / CF5610) (Burkholderia cepacia (strain J2315)).